A 362-amino-acid polypeptide reads, in one-letter code: Anthranilate phosphoribosyltransferase (362 aa).

Residues Gly96, 99-100, Thr104, 106-109, 124-132, and Gly136 each bind 5-phospho-alpha-D-ribose 1-diphosphate; these read GD, NIST, and KHGNRAASS. Gly96 is a binding site for anthranilate. A Mg(2+)-binding site is contributed by Ser108. Anthranilate is bound at residue Asn127. Arg182 is an anthranilate binding site. 2 residues coordinate Mg(2+): Asp240 and Glu241.

The protein belongs to the anthranilate phosphoribosyltransferase family. Homodimer. Requires Mg(2+) as cofactor.

The catalysed reaction is N-(5-phospho-beta-D-ribosyl)anthranilate + diphosphate = 5-phospho-alpha-D-ribose 1-diphosphate + anthranilate. The protein operates within amino-acid biosynthesis; L-tryptophan biosynthesis; L-tryptophan from chorismate: step 2/5. In terms of biological role, catalyzes the transfer of the phosphoribosyl group of 5-phosphorylribose-1-pyrophosphate (PRPP) to anthranilate to yield N-(5'-phosphoribosyl)-anthranilate (PRA). This is Anthranilate phosphoribosyltransferase from Rhodococcus jostii (strain RHA1).